The primary structure comprises 151 residues: Large ribosomal subunit protein uL13 (151 aa).

The protein belongs to the universal ribosomal protein uL13 family. In terms of assembly, part of the 50S ribosomal subunit.

In terms of biological role, this protein is one of the early assembly proteins of the 50S ribosomal subunit, although it is not seen to bind rRNA by itself. It is important during the early stages of 50S assembly. The polypeptide is Large ribosomal subunit protein uL13 (Petrotoga mobilis (strain DSM 10674 / SJ95)).